A 223-amino-acid chain; its full sequence is Pyridoxine/pyridoxamine 5'-phosphate oxidase (223 aa).

Residues 8–11 (RVDY) and Lys65 contribute to the substrate site. Residues 60–65 (RTVLLK), 75–76 (YT), Arg81, Lys82, and Gln104 contribute to the FMN site. Substrate-binding residues include Tyr122, Arg126, and Ser130. FMN-binding positions include 139–140 (QS) and Trp188. Residue 194–196 (RLH) coordinates substrate. Arg198 is an FMN binding site.

The protein belongs to the pyridoxamine 5'-phosphate oxidase family. Homodimer. Requires FMN as cofactor.

The catalysed reaction is pyridoxamine 5'-phosphate + O2 + H2O = pyridoxal 5'-phosphate + H2O2 + NH4(+). It carries out the reaction pyridoxine 5'-phosphate + O2 = pyridoxal 5'-phosphate + H2O2. It functions in the pathway cofactor metabolism; pyridoxal 5'-phosphate salvage; pyridoxal 5'-phosphate from pyridoxamine 5'-phosphate: step 1/1. The protein operates within cofactor metabolism; pyridoxal 5'-phosphate salvage; pyridoxal 5'-phosphate from pyridoxine 5'-phosphate: step 1/1. In terms of biological role, catalyzes the oxidation of either pyridoxine 5'-phosphate (PNP) or pyridoxamine 5'-phosphate (PMP) into pyridoxal 5'-phosphate (PLP). The protein is Pyridoxine/pyridoxamine 5'-phosphate oxidase of Kineococcus radiotolerans (strain ATCC BAA-149 / DSM 14245 / SRS30216).